The following is a 244-amino-acid chain: NAD(P)H-quinone oxidoreductase subunit K (244 aa).

Positions 60, 61, 125, and 156 each coordinate [4Fe-4S] cluster. A disordered region spans residues 213–244 (KSEKSIESSKLNPVEESSENIYETNSIDEVIK). Over residues 231–244 (ENIYETNSIDEVIK) the composition is skewed to polar residues.

Belongs to the complex I 20 kDa subunit family. In terms of assembly, NDH-1 can be composed of about 15 different subunits; different subcomplexes with different compositions have been identified which probably have different functions. It depends on [4Fe-4S] cluster as a cofactor.

Its subcellular location is the cellular thylakoid membrane. It catalyses the reaction a plastoquinone + NADH + (n+1) H(+)(in) = a plastoquinol + NAD(+) + n H(+)(out). The enzyme catalyses a plastoquinone + NADPH + (n+1) H(+)(in) = a plastoquinol + NADP(+) + n H(+)(out). NDH-1 shuttles electrons from an unknown electron donor, via FMN and iron-sulfur (Fe-S) centers, to quinones in the respiratory and/or the photosynthetic chain. The immediate electron acceptor for the enzyme in this species is believed to be plastoquinone. Couples the redox reaction to proton translocation, and thus conserves the redox energy in a proton gradient. Cyanobacterial NDH-1 also plays a role in inorganic carbon-concentration. This Prochlorococcus marinus subsp. pastoris (strain CCMP1986 / NIES-2087 / MED4) protein is NAD(P)H-quinone oxidoreductase subunit K.